We begin with the raw amino-acid sequence, 50 residues long: U-megalopygitoxin(9)-Mo13 (50 aa).

An N-terminal signal peptide occupies residues M1 to A23. A disulfide bond links C33 and C40.

It belongs to the caterpillar 9 family. In terms of tissue distribution, expressed by the venom apparatus.

The protein resides in the secreted. Its function is as follows. Probable toxin. The chain is U-megalopygitoxin(9)-Mo13 from Megalopyge opercularis (Southern flannel moth).